The chain runs to 213 residues: Riboflavin/roseoflavin transporter RibM (213 aa).

5 helical membrane passes run 15–35 (HIIWSDMVGNILGLITLALGF), 38–58 (SLWTWPVQFLSGLVLFGAFYG), 107–129 (IAAAAVGTVAVALLFKAYPSLSW), 136–158 (YIFVGTIVAMYAQARGMVEFWFA), and 171–193 (FANGYAFSGFVYVIYGALVLWGM).

It belongs to the nicotinamide ribonucleoside (NR) uptake permease (TC 4.B.1) family.

It localises to the cell membrane. Transports riboflavin and roseoflavin. Can also transport FMN and FAD. May confer roseoflavin resistance to S.davawensis, which naturally produces this antibiotic during stationary growth phase. The polypeptide is Riboflavin/roseoflavin transporter RibM (Streptomyces davaonensis (strain DSM 101723 / JCM 4913 / KCC S-0913 / 768)).